Consider the following 539-residue polypeptide: Chaperonin GroEL 1 (539 aa).

ATP-binding positions include 29 to 32 (TLGP), 86 to 90 (DGTTT), Gly-413, 478 to 480 (NAA), and Asp-494.

The protein belongs to the chaperonin (HSP60) family. In terms of assembly, forms a cylinder of 14 subunits composed of two heptameric rings stacked back-to-back. Interacts with the co-chaperonin GroES.

It is found in the cytoplasm. It catalyses the reaction ATP + H2O + a folded polypeptide = ADP + phosphate + an unfolded polypeptide.. In terms of biological role, together with its co-chaperonin GroES, plays an essential role in assisting protein folding. The GroEL-GroES system forms a nano-cage that allows encapsulation of the non-native substrate proteins and provides a physical environment optimized to promote and accelerate protein folding. This chain is Chaperonin GroEL 1, found in Corynebacterium diphtheriae (strain ATCC 700971 / NCTC 13129 / Biotype gravis).